The following is a 197-amino-acid chain: ATP-dependent Clp protease proteolytic subunit 2 (197 aa).

Serine 101 (nucleophile) is an active-site residue. Histidine 126 is an active-site residue.

This sequence belongs to the peptidase S14 family. In terms of assembly, fourteen ClpP subunits assemble into 2 heptameric rings which stack back to back to give a disk-like structure with a central cavity, resembling the structure of eukaryotic proteasomes.

It is found in the cytoplasm. The enzyme catalyses Hydrolysis of proteins to small peptides in the presence of ATP and magnesium. alpha-casein is the usual test substrate. In the absence of ATP, only oligopeptides shorter than five residues are hydrolyzed (such as succinyl-Leu-Tyr-|-NHMec, and Leu-Tyr-Leu-|-Tyr-Trp, in which cleavage of the -Tyr-|-Leu- and -Tyr-|-Trp bonds also occurs).. Cleaves peptides in various proteins in a process that requires ATP hydrolysis. Has a chymotrypsin-like activity. Plays a major role in the degradation of misfolded proteins. This Trichormus variabilis (strain ATCC 29413 / PCC 7937) (Anabaena variabilis) protein is ATP-dependent Clp protease proteolytic subunit 2.